A 141-amino-acid polypeptide reads, in one-letter code: Mitochondrial import inner membrane translocase subunit tim16 (141 aa).

Residues 59-117 (EACKILNVNKPADGTAANMEEVMERFKRLFDANDPEKGGSFYLQSKVVRARERLEAEIK) are J-like. Residues 119-141 (KMEEKQAEEEVKEGWNPKIYKDR) are disordered.

The protein belongs to the TIM16/PAM16 family. In terms of assembly, heterodimer with tim14/pam18. Component of the PAM complex, at least composed of hsp70-5/ssc1, grpe/mge1, tim44, un-4/pam16, pam17 and tim14/pam18.

Its subcellular location is the mitochondrion inner membrane. In terms of biological role, essential component of the PAM complex, a complex required for the translocation of transit peptide-containing proteins from the inner membrane into the mitochondrial matrix in an ATP-dependent manner. In the complex, it is required to regulate activity of mtHSP70 (hsp70-5) via its interaction with tim14/pam18. May act by positioning tim14/pam18 in juxtaposition to mtHSP70 at the translocon to maximize ATPase stimulation. The protein is Mitochondrial import inner membrane translocase subunit tim16 (un-4) of Neurospora crassa (strain ATCC 24698 / 74-OR23-1A / CBS 708.71 / DSM 1257 / FGSC 987).